The sequence spans 465 residues: ATP-sulfurylase 3, chloroplastic (465 aa).

The N-terminal 49 residues, 1 to 49 (MASMSTVFPKPTSFISQPLTKSHKSDSVTTSISFPSNSKTRSLRTISVR), are a transit peptide targeting the chloroplast.

The protein belongs to the sulfate adenylyltransferase family. As to quaternary structure, homotetramer.

It is found in the plastid. The protein resides in the chloroplast stroma. The enzyme catalyses sulfate + ATP + H(+) = adenosine 5'-phosphosulfate + diphosphate. It functions in the pathway sulfur metabolism; hydrogen sulfide biosynthesis; sulfite from sulfate: step 1/3. This is ATP-sulfurylase 3, chloroplastic (APS3) from Arabidopsis thaliana (Mouse-ear cress).